A 69-amino-acid polypeptide reads, in one-letter code: Conotoxin Cal12.1p5 (69 aa).

The propeptide occupies 1-23 (DLITNSYTRGKPRHVTSWRNLKT).

In terms of processing, contains 4 disulfide bonds. Expressed by the venom duct.

The protein resides in the secreted. The sequence is that of Conotoxin Cal12.1p5 from Californiconus californicus (California cone).